Here is a 496-residue protein sequence, read N- to C-terminus: Aspartic proteinase (496 aa).

The first 24 residues, 1-24 (MAKRHLLLVTTCLWALSCALLLHA), serve as a signal peptide directing secretion. Residues 25–59 (SSDGFLRVNLNKKRLDKEDLTAAKLAQQGNRLLKT) constitute a propeptide, activation peptide. One can recognise a Peptidase A1 domain in the interval 77–493 (YYGVIGLGSP…DFGKDRIGFA (417 aa)). Asp-95 is a catalytic residue. Disulfide bonds link Cys-108–Cys-114 and Cys-273–Cys-277. Asp-282 is an active-site residue. The Saposin B-type domain maps to 307–407 (IISTECKEVV…NQLCERLPSP (101 aa)). 4 cysteine pairs are disulfide-bonded: Cys-312–Cys-401, Cys-337–Cys-373, Cys-343–Cys-370, and Cys-415–Cys-452. Asn-387 carries N-linked (GlcNAc...) asparagine glycosylation.

The protein belongs to the peptidase A1 family.

Its subcellular location is the vacuole. In terms of biological role, involved in the breakdown of propeptides of storage proteins in protein-storage vacuoles. This chain is Aspartic proteinase (RAP), found in Oryza sativa subsp. japonica (Rice).